The primary structure comprises 508 residues: Probable zinc metalloprotease MCYG_04217 (508 aa).

Asparagine 111 carries an N-linked (GlcNAc...) asparagine glycan. Zn(2+) contacts are provided by histidine 182, aspartate 202, and glutamate 238. The N-linked (GlcNAc...) asparagine glycan is linked to asparagine 253. Residue aspartate 265 coordinates Zn(2+). A Fibronectin type-III domain is found at 422 to 508 (MPRNVRVDTS…ERGVAVLPFP (87 aa)). Asparagine 435 is a glycosylation site (N-linked (GlcNAc...) asparagine).

The protein belongs to the peptidase M28 family. M28B subfamily. Zn(2+) serves as cofactor.

The protein localises to the secreted. In Arthroderma otae (strain ATCC MYA-4605 / CBS 113480) (Microsporum canis), this protein is Probable zinc metalloprotease MCYG_04217.